Here is a 150-residue protein sequence, read N- to C-terminus: Small ribosomal subunit protein uS11 (150 aa).

The disordered stretch occupies residues 130–150; it reads DVTPIPSDSTRRKSGRRGRRL. The span at 141–150 shows a compositional bias: basic residues; that stretch reads RKSGRRGRRL.

Belongs to the universal ribosomal protein uS11 family.

The chain is Small ribosomal subunit protein uS11 (RPS14) from Lupinus luteus (European yellow lupine).